A 580-amino-acid polypeptide reads, in one-letter code: Extracellular protease (580 aa).

Residues 1 to 32 (MSTASLRKRTGSLTILGASALTSLLLAMPAFA) form the signal peptide. Residues 33–136 (GEVYLDGLAT…VEVDQILHAT (104 aa)) constitute a propeptide that is removed on maturation. The Peptidase S8 domain maps to 147-465 (QWAFGTTNAG…AGIVNADAAV (319 aa)). Active-site charge relay system residues include Asp177 and His237. Cystine bridges form between Cys225–Cys273 and Cys315–Cys352. Ser409 (charge relay system) is an active-site residue. A disulfide bond links Cys450 and Cys454.

This sequence belongs to the peptidase S8 family.

The protein localises to the secreted. The chain is Extracellular protease from Xanthomonas campestris pv. campestris (strain ATCC 33913 / DSM 3586 / NCPPB 528 / LMG 568 / P 25).